A 155-amino-acid polypeptide reads, in one-letter code: uncharacterized protein (155 aa).

2 disordered regions span residues 24–63 (RVGY…VVLK) and 80–155 (KAAK…DENE). A Phosphoserine modification is found at S50. An N6-acetyllysine modification is found at K108. The span at 128–147 (KQSSVRKNSQKQIKNSSLLS) shows a compositional bias: polar residues. 3 positions are modified to phosphoserine: S130, S147, and S150.

This is an uncharacterized protein from Mus musculus (Mouse).